We begin with the raw amino-acid sequence, 268 residues long: 4-hydroxy-tetrahydrodipicolinate reductase (268 aa).

NAD(+)-binding positions include 8–13 and Glu-34; that span reads GGGGKM. Residue Lys-35 participates in NADP(+) binding. NAD(+) is bound by residues 98–100 and 122–125; these read GST and APNM. The active-site Proton donor/acceptor is the His-155. (S)-2,3,4,5-tetrahydrodipicolinate is bound at residue His-156. Residue Lys-159 is the Proton donor of the active site. Residue 165–166 coordinates (S)-2,3,4,5-tetrahydrodipicolinate; the sequence is GT.

The protein belongs to the DapB family.

It localises to the cytoplasm. It carries out the reaction (S)-2,3,4,5-tetrahydrodipicolinate + NAD(+) + H2O = (2S,4S)-4-hydroxy-2,3,4,5-tetrahydrodipicolinate + NADH + H(+). The enzyme catalyses (S)-2,3,4,5-tetrahydrodipicolinate + NADP(+) + H2O = (2S,4S)-4-hydroxy-2,3,4,5-tetrahydrodipicolinate + NADPH + H(+). The protein operates within amino-acid biosynthesis; L-lysine biosynthesis via DAP pathway; (S)-tetrahydrodipicolinate from L-aspartate: step 4/4. Functionally, catalyzes the conversion of 4-hydroxy-tetrahydrodipicolinate (HTPA) to tetrahydrodipicolinate. The protein is 4-hydroxy-tetrahydrodipicolinate reductase of Syntrophus aciditrophicus (strain SB).